A 156-amino-acid polypeptide reads, in one-letter code: MSRRSTAEKETAKSDPIYRNRLVNMLVNRILRHGKKSLAYRIIYRAMKNIQQKTEKNPLSVLRQAIRGVTPNVTVKTRRVGGSTYQVPIEIRSTQAKALAIRWLLGASRKRPPGRNMAFKLSYELMDAARENGNAIRKKEETHRMAEANRAFAHFR.

It belongs to the universal ribosomal protein uS7 family. Part of the 30S ribosomal subunit.

Its subcellular location is the plastid. The protein resides in the chloroplast. One of the primary rRNA binding proteins, it binds directly to 16S rRNA where it nucleates assembly of the head domain of the 30S subunit. The chain is Small ribosomal subunit protein uS7c (rps7) from Stangeria eriopus (Natal grass cycad).